The primary structure comprises 188 residues: MSDSKEITKVIVTMVVISAVAAALLALTYTPTQAQLKLLQAEQQKEAMKEILPQAADFEPVTGSEVDDDGNPVVLYYKGVDSSGNVVGYVVERNQVGAQGMIQLLAGISSDFSTITGFQVMKHSETPGLGALITTPEFQGQFVDLPVADTSLTKNGGQVDAISGATISSQAVVDALHSAVDYVSAQEG.

The Cytoplasmic portion of the chain corresponds to 1–9 (MSDSKEITK). A helical membrane pass occupies residues 10 to 30 (VIVTMVVISAVAAALLALTYT). The Extracellular portion of the chain corresponds to 31–188 (PTQAQLKLLQ…AVDYVSAQEG (158 aa)). Position 166 is an FMN phosphoryl threonine (Thr-166).

Belongs to the RnfG family. The Rnf complex is probably composed of eight subunits, including RnfA, RnfB, RnfC, RnfD, RnfE and RnfG. Requires FMN as cofactor.

The protein resides in the cell membrane. In terms of biological role, part of a membrane-bound complex that couples electron transfer with translocation of ions across the membrane. Catalyzes Na(+) transport, most probably coupled to electron transfer from reduced ferredoxin to methanophenazine and heterodisulfide reductase. Involved in heterodisulfide reduction during methanogenesis from acetate. This Methanosarcina acetivorans (strain ATCC 35395 / DSM 2834 / JCM 12185 / C2A) protein is Ion-translocating oxidoreductase complex subunit G.